The following is a 520-amino-acid chain: Tubby-related protein 2 (520 aa).

A phosphoserine mark is found at Ser135 and Ser190. Positions 141–236 (EVSVENGSVS…GTNSSAAHNE (96 aa)) are disordered. Basic and acidic residues predominate over residues 211 to 223 (QKEEDLEKKREAS). The span at 224 to 233 (ESTGTNSSAA) shows a compositional bias: polar residues.

Belongs to the TUB family. In terms of tissue distribution, strongly expressed in testis. Also expressed in retina. Expressed in cancer cell lines.

Its subcellular location is the cytoplasm. The protein resides in the secreted. This chain is Tubby-related protein 2 (TULP2), found in Homo sapiens (Human).